A 308-amino-acid chain; its full sequence is tRNA dimethylallyltransferase (308 aa).

Position 19-26 (19-26 (GPTASGKS)) interacts with ATP. Substrate is bound at residue 21-26 (TASGKS). Residues 44-47 (DSMQ) are interaction with substrate tRNA.

This sequence belongs to the IPP transferase family. As to quaternary structure, monomer. The cofactor is Mg(2+).

It catalyses the reaction adenosine(37) in tRNA + dimethylallyl diphosphate = N(6)-dimethylallyladenosine(37) in tRNA + diphosphate. In terms of biological role, catalyzes the transfer of a dimethylallyl group onto the adenine at position 37 in tRNAs that read codons beginning with uridine, leading to the formation of N6-(dimethylallyl)adenosine (i(6)A). The polypeptide is tRNA dimethylallyltransferase (Methylobacterium radiotolerans (strain ATCC 27329 / DSM 1819 / JCM 2831 / NBRC 15690 / NCIMB 10815 / 0-1)).